Reading from the N-terminus, the 314-residue chain is NF-kappa-B inhibitor alpha (314 aa).

The disordered stretch occupies residues 1-40; sequence MFQPAGHGQDWAMEGPRDGLKKERLVDDRHDSGLDSMKDE. Residues 15–40 show a composition bias toward basic and acidic residues; the sequence is GPRDGLKKERLVDDRHDSGLDSMKDE. A Glycyl lysine isopeptide (Lys-Gly) (interchain with G-Cter in SUMO); alternate cross-link involves residue K21. Residue K21 forms a Glycyl lysine isopeptide (Lys-Gly) (interchain with G-Cter in ubiquitin); alternate linkage. K22 is covalently cross-linked (Glycyl lysine isopeptide (Lys-Gly) (interchain with G-Cter in ubiquitin)). The Destruction motif motif lies at 30–36; the sequence is HDSGLDS. Phosphoserine; by IKKB is present on S32. A Phosphoserine; by IKKA, IKKB, IKKE and TBK1 modification is found at S36. Y42 bears the Phosphotyrosine mark. The Nuclear export signal motif lies at 45-54; that stretch reads MVKELREIRL. 5 ANK repeats span residues 73–103, 110–139, 143–172, 182–211, and 216–245; these read DGDS…DLAF, LQQT…DPEL, RGNT…PQHL, NGHT…DVNA, and NGRT…DVNR. Positions 110 to 120 match the Nuclear import signal motif; it reads LQQTPLHLAVI. Residues N210 and N244 each carry the (3S)-3-hydroxyasparagine; by HIF1AN modification. 2 positions are modified to phosphoserine; by CK2: S283 and S288. T291 carries the post-translational modification Phosphothreonine; by CK2. S293 is modified (phosphoserine; by CK2). A Phosphothreonine modification is found at T296.

This sequence belongs to the NF-kappa-B inhibitor family. Interacts with RELA; the interaction requires the nuclear import signal. Part of a 70-90 kDa complex at least consisting of CHUK, IKBKB, NFKBIA, RELA, ELP1 and MAP3K14. Interacts with NKIRAS1 and NKIRAS2. Interacts with RWDD3; the interaction enhances sumoylation. Interacts with PRMT2. Interacts with PRKACA in platelets; this interaction is disrupted by thrombin and collagen. Interacts with MEFV. Interacts with DDRGK1; positively regulates NFKBIA phosphorylation and degradation. Interacts with HNRNPA2B1; the interaction may be mediated by the RRM2 domain of HNRNPA2B1, and HNRNPA2B1 may interact simultaneously with FAM76B and either NFKBIA or NFKBIE to form a complex. Post-translationally, phosphorylated at Ser-32 and Ser-36 by IKKA/CHUK and IKKB/IKBKB; disables inhibition of NF-kappa-B DNA-binding activity. Phosphorylation at positions 32 and 36 is prerequisite to recognition by the SCF(FBXW11) and SCF(BTRC) complexes, leading to polyubiquitination and subsequent degradation. Polyubiquitinated at Lys-21 and/or Lys-22 following phosphorylation at Ser-32 and Ser-36. Monoubiquitinated at Lys-21 and/or Lys-22 by UBE2D3. Ubiquitin chain elongation is then performed by CDC34 in cooperation with the SCF(FBXW11) E3 ligase complex, building ubiquitin chains from the UBE2D3-primed NFKBIA-linked ubiquitin. The resulting polyubiquitination leads to protein degradation. Also ubiquitinated by the SCF(BTRC) complex following stimulus-dependent phosphorylation at Ser-32 and Ser-36. Deubiquitinated by USP38, leading to NF-kappa-B inhibition. In terms of processing, sumoylated; sumoylation requires the presence of the nuclear import signal. Sumoylation blocks ubiquitination and proteasome-mediated degradation of the protein thereby increasing the protein stability. Post-translationally, hydroxylated by HIF1AN. In terms of tissue distribution, highly expressed in lymph node, thymus followed by liver, brain, muscle, kidney, gastrointestinal and reproductive tract.

Its subcellular location is the cytoplasm. The protein resides in the nucleus. Its function is as follows. Inhibits the activity of dimeric NF-kappa-B/REL complexes by trapping REL (RELA/p65 and NFKB1/p50) dimers in the cytoplasm by masking their nuclear localization signals. On cellular stimulation by immune and pro-inflammatory responses, becomes phosphorylated promoting ubiquitination and degradation, enabling the dimeric RELA to translocate to the nucleus and activate transcription. In Mus musculus (Mouse), this protein is NF-kappa-B inhibitor alpha (Nfkbia).